A 398-amino-acid chain; its full sequence is Ornithine aminotransferase (398 aa).

Lys-256 carries the N6-(pyridoxal phosphate)lysine modification.

Belongs to the class-III pyridoxal-phosphate-dependent aminotransferase family. OAT subfamily. Requires pyridoxal 5'-phosphate as cofactor.

The protein resides in the cytoplasm. The catalysed reaction is a 2-oxocarboxylate + L-ornithine = L-glutamate 5-semialdehyde + an L-alpha-amino acid. It participates in amino-acid biosynthesis; L-proline biosynthesis; L-glutamate 5-semialdehyde from L-ornithine: step 1/1. Functionally, catalyzes the interconversion of ornithine to glutamate semialdehyde. This chain is Ornithine aminotransferase, found in Oceanobacillus iheyensis (strain DSM 14371 / CIP 107618 / JCM 11309 / KCTC 3954 / HTE831).